A 569-amino-acid chain; its full sequence is Sulfite reductase [NADPH] hemoprotein beta-component (569 aa).

C434, C440, C479, and C483 together coordinate [4Fe-4S] cluster. Residue C483 coordinates siroheme.

This sequence belongs to the nitrite and sulfite reductase 4Fe-4S domain family. In terms of assembly, alpha(8)-beta(8). The alpha component is a flavoprotein, the beta component is a hemoprotein. It depends on siroheme as a cofactor. Requires [4Fe-4S] cluster as cofactor.

It catalyses the reaction hydrogen sulfide + 3 NADP(+) + 3 H2O = sulfite + 3 NADPH + 4 H(+). The protein operates within sulfur metabolism; hydrogen sulfide biosynthesis; hydrogen sulfide from sulfite (NADPH route): step 1/1. Component of the sulfite reductase complex that catalyzes the 6-electron reduction of sulfite to sulfide. This is one of several activities required for the biosynthesis of L-cysteine from sulfate. This chain is Sulfite reductase [NADPH] hemoprotein beta-component, found in Staphylococcus saprophyticus subsp. saprophyticus (strain ATCC 15305 / DSM 20229 / NCIMB 8711 / NCTC 7292 / S-41).